The primary structure comprises 44 residues: Entericidin A (44 aa).

An N-terminal signal peptide occupies residues 1-21; it reads MMKRLLGLVMLLLFTCTLLTG. Residue Cys22 is the site of N-palmitoyl cysteine attachment. Cys22 carries S-diacylglycerol cysteine lipidation.

The protein belongs to the EcnA/EcnB lipoprotein family.

It is found in the cell membrane. Functionally, acts as antidote to the effect of entericidin B. The protein is Entericidin A (ecnA) of Citrobacter freundii.